Reading from the N-terminus, the 373-residue chain is Leucoanthocyanidin dioxygenase 2 (373 aa).

One can recognise a Fe2OG dioxygenase domain in the interval 216–315 (LLLQLKINYY…RVSWVVFCEP (100 aa)). Residues His240, Asp242, and His296 each coordinate Fe cation. Arg306 contributes to the 2-oxoglutarate binding site.

Belongs to the iron/ascorbate-dependent oxidoreductase family. L-ascorbate serves as cofactor. Fe(2+) is required as a cofactor.

The catalysed reaction is a (2R,3S,4S)-leucoanthocyanidin + 2-oxoglutarate + O2 = a 4-H-anthocyanidin with a 3-hydroxy group + succinate + CO2 + 2 H2O. Its pathway is pigment biosynthesis; anthocyanin biosynthesis. Functionally, involved in anthocyanin and protoanthocyanidin biosynthesis by catalyzing the oxidation of leucoanthocyanidins into anthocyanidins. In Oryza sativa subsp. japonica (Rice), this protein is Leucoanthocyanidin dioxygenase 2.